The primary structure comprises 216 residues: ATP-dependent Clp protease proteolytic subunit (216 aa).

The Nucleophile role is filled by serine 101. The active site involves histidine 126.

The protein belongs to the peptidase S14 family. In terms of assembly, component of the chloroplastic Clp protease core complex.

It localises to the plastid. Its subcellular location is the chloroplast stroma. It carries out the reaction Hydrolysis of proteins to small peptides in the presence of ATP and magnesium. alpha-casein is the usual test substrate. In the absence of ATP, only oligopeptides shorter than five residues are hydrolyzed (such as succinyl-Leu-Tyr-|-NHMec, and Leu-Tyr-Leu-|-Tyr-Trp, in which cleavage of the -Tyr-|-Leu- and -Tyr-|-Trp bonds also occurs).. In terms of biological role, cleaves peptides in various proteins in a process that requires ATP hydrolysis. Has a chymotrypsin-like activity. Plays a major role in the degradation of misfolded proteins. The polypeptide is ATP-dependent Clp protease proteolytic subunit (Saccharum hybrid (Sugarcane)).